The chain runs to 454 residues: L-serine dehydratase TdcG (454 aa).

It belongs to the iron-sulfur dependent L-serine dehydratase family. Requires [4Fe-4S] cluster as cofactor.

The catalysed reaction is L-serine = pyruvate + NH4(+). It participates in amino-acid degradation; L-threonine degradation via propanoate pathway. This chain is L-serine dehydratase TdcG (tdcG), found in Escherichia coli (strain K12).